The following is a 381-amino-acid chain: Complement decay-accelerating factor (381 aa).

An N-terminal signal peptide occupies residues 1-34; that stretch reads MTVARPSVPAALPLLGELPRLLLLVLLCLPAVWG. Sushi domains follow at residues 35 to 96, 96 to 160, 161 to 222, and 223 to 285; these read DCGL…FCNR, RSCE…FCKK, KSCP…ECRE, and IYCP…ECRG. 2 cysteine pairs are disulfide-bonded: Cys-36–Cys-81 and Cys-65–Cys-94. The N-linked (GlcNAc...) asparagine glycan is linked to Asn-95. 6 cysteine pairs are disulfide-bonded: Cys-98/Cys-145, Cys-129/Cys-158, Cys-163/Cys-204, Cys-190/Cys-220, Cys-225/Cys-267, and Cys-253/Cys-283. The disordered stretch occupies residues 277–354; sequence SGPPPECRGK…PNKGSGTTSG (78 aa). Positions 287-309 are enriched in polar residues; it reads SLTSKVPPTVQKPTTVNVPTTEV. Positions 310–328 are enriched in low complexity; it reads SPTSQKTTTKTTTPNAQAT. Ser-353 carries the GPI-anchor amidated serine lipid modification. Positions 354–381 are cleaved as a propeptide — removed in mature form; the sequence is GTTRLLSGHTCFTLTGLLGTLVTMGLLT.

The protein belongs to the receptors of complement activation (RCA) family. In terms of assembly, monomer (major form) and non-disulfide-linked, covalent homodimer (minor form). Interacts with ADGRE5. As to quaternary structure, (Microbial infection) Interacts with coxsackievirus A21, coxsackieviruses B1, B3 and B5 capsid proteins. (Microbial infection) Interacts with human enterovirus 70 and D68 capsid proteins. In terms of assembly, (Microbial infection) Interacts with human echoviruses 6, 7, 11, 12, 20 and 21 capsid proteins. In terms of processing, the Ser/Thr-rich domain is heavily O-glycosylated. As to expression, expressed on the plasma membranes of all cell types that are in intimate contact with plasma complement proteins. It is also found on the surfaces of epithelial cells lining extracellular compartments, and variants of the molecule are present in body fluids and in extracellular matrix.

Its subcellular location is the cell membrane. It localises to the secreted. Functionally, this protein recognizes C4b and C3b fragments that condense with cell-surface hydroxyl or amino groups when nascent C4b and C3b are locally generated during C4 and c3 activation. Interaction of daf with cell-associated C4b and C3b polypeptides interferes with their ability to catalyze the conversion of C2 and factor B to enzymatically active C2a and Bb and thereby prevents the formation of C4b2a and C3bBb, the amplification convertases of the complement cascade. Inhibits complement activation by destabilizing and preventing the formation of C3 and C5 convertases, which prevents complement damage. Its function is as follows. (Microbial infection) Acts as a receptor for Coxsackievirus A21, coxsackieviruses B1, B3 and B5. In terms of biological role, (Microbial infection) Acts as a receptor for Human enterovirus 70 and D68. (Microbial infection) Acts as a receptor for Human echoviruses 6, 7, 11, 12, 20 and 21. This Homo sapiens (Human) protein is Complement decay-accelerating factor (CD55).